The chain runs to 290 residues: Ras-like protein 1 (290 aa).

Glycine 11 to serine 18 is a binding site for GTP. Residues tyrosine 33–tyrosine 41 carry the Effector region motif. Residues aspartate 58–glutamine 62 and asparagine 117–aspartate 120 contribute to the GTP site. The interval glutamate 176–valine 290 is disordered. Composition is skewed to low complexity over residues glutamine 178–asparagine 216 and proline 246–lysine 283. Cysteine 286 carries S-palmitoyl cysteine lipidation. Cysteine 287 carries the cysteine methyl ester modification. Residue cysteine 287 is the site of S-farnesyl cysteine attachment. Residues valine 288–valine 290 constitute a propeptide, removed in mature form.

Belongs to the small GTPase superfamily. Ras family.

The protein localises to the cell membrane. Alternates between an inactive form bound to GDP and an active form bound to GTP. Activated by a guanine nucleotide-exchange factor (GEF) and inactivated by a GTPase-activating protein (GAP). Its function is as follows. Required for the regulation of both a MAP kinase signaling pathway and a cAMP signaling pathway. The activation of these pathways contributes to the pathogenicity of the cells through the induction of the morphological transition from the yeast to the polarized filamentous form. The protein is Ras-like protein 1 (RAS1) of Candida albicans (strain SC5314 / ATCC MYA-2876) (Yeast).